The chain runs to 61 residues: Photosystem II reaction center protein K (61 aa).

The propeptide occupies 1–24 (MLNILSFIGICLNSFLYSSSFFVA). Residues 40–60 (MPVIPLFFFLLAFVWQAAVSF) form a helical membrane-spanning segment.

Belongs to the PsbK family. PSII is composed of 1 copy each of membrane proteins PsbA, PsbB, PsbC, PsbD, PsbE, PsbF, PsbH, PsbI, PsbJ, PsbK, PsbL, PsbM, PsbT, PsbX, PsbY, PsbZ, Psb30/Ycf12, at least 3 peripheral proteins of the oxygen-evolving complex and a large number of cofactors. It forms dimeric complexes.

Its subcellular location is the plastid. It localises to the chloroplast thylakoid membrane. Its function is as follows. One of the components of the core complex of photosystem II (PSII). PSII is a light-driven water:plastoquinone oxidoreductase that uses light energy to abstract electrons from H(2)O, generating O(2) and a proton gradient subsequently used for ATP formation. It consists of a core antenna complex that captures photons, and an electron transfer chain that converts photonic excitation into a charge separation. The polypeptide is Photosystem II reaction center protein K (Cucumis sativus (Cucumber)).